We begin with the raw amino-acid sequence, 271 residues long: Pyrroline-5-carboxylate reductase (271 aa).

The protein belongs to the pyrroline-5-carboxylate reductase family.

It is found in the cytoplasm. It carries out the reaction L-proline + NADP(+) = (S)-1-pyrroline-5-carboxylate + NADPH + 2 H(+). It catalyses the reaction L-proline + NAD(+) = (S)-1-pyrroline-5-carboxylate + NADH + 2 H(+). Its pathway is amino-acid biosynthesis; L-proline biosynthesis; L-proline from L-glutamate 5-semialdehyde: step 1/1. Catalyzes the reduction of 1-pyrroline-5-carboxylate (PCA) to L-proline. The sequence is that of Pyrroline-5-carboxylate reductase from Staphylococcus saprophyticus subsp. saprophyticus (strain ATCC 15305 / DSM 20229 / NCIMB 8711 / NCTC 7292 / S-41).